A 164-amino-acid chain; its full sequence is MSSSVSSKTRYWVLALAAIVLDQWSKWAVLSSFQYRERVNVIPSFFDLTLVYNPGAAFSFLADQGGWQKYFFLVLAVAVSAYLVRAILRDEFATLGKTGAAMIIGGALGNVIDRLIHGHVVDFLLFYWQNWFYPAFNIADSFICVGAVLAVLDNIVHRKDGKKT.

A run of 4 helical transmembrane segments spans residues 11–31 (YWVL…AVLS), 41–61 (VIPS…FSFL), 64–84 (QGGW…AYLV), and 92–112 (FATL…GNVI). Residues D122 and D140 contribute to the active site. The helical transmembrane segment at 132 to 152 (FYPAFNIADSFICVGAVLAVL) threads the bilayer.

This sequence belongs to the peptidase A8 family.

The protein resides in the cell inner membrane. The enzyme catalyses Release of signal peptides from bacterial membrane prolipoproteins. Hydrolyzes -Xaa-Yaa-Zaa-|-(S,diacylglyceryl)Cys-, in which Xaa is hydrophobic (preferably Leu), and Yaa (Ala or Ser) and Zaa (Gly or Ala) have small, neutral side chains.. The protein operates within protein modification; lipoprotein biosynthesis (signal peptide cleavage). This protein specifically catalyzes the removal of signal peptides from prolipoproteins. This Neisseria meningitidis serogroup C (strain 053442) protein is Lipoprotein signal peptidase.